A 124-amino-acid polypeptide reads, in one-letter code: uncharacterized protein (124 aa).

It localises to the cytoplasm. It is found in the nucleus. This is an uncharacterized protein from Schizosaccharomyces pombe (strain 972 / ATCC 24843) (Fission yeast).